The following is a 518-amino-acid chain: Arginyl-tRNA--protein transferase 1 (518 aa).

Ser-169 carries the phosphoserine modification. Residues Glu-175 to Pro-203 are disordered.

Belongs to the R-transferase family. As to quaternary structure, monomer. Interacts with LIAT1; LIAT1 is not a substrate of ATE1, the interaction takes place in the cytoplasm and seems to increase ATE1 arginyltransferase activity.

The protein localises to the nucleus. Its subcellular location is the cytoplasm. It carries out the reaction an N-terminal L-alpha-aminoacyl-[protein] + L-arginyl-tRNA(Arg) = an N-terminal L-arginyl-L-aminoacyl-[protein] + tRNA(Arg) + H(+). In terms of biological role, involved in the post-translational conjugation of arginine to the N-terminal aspartate or glutamate of a protein. This arginylation is required for degradation of the protein via the ubiquitin pathway. Does not arginylate cysteine residues. This chain is Arginyl-tRNA--protein transferase 1, found in Homo sapiens (Human).